The chain runs to 163 residues: Transcription elongation factor GreA (163 aa).

Residues 45–65 (NAEYHAAREKQAFIEARINEL) are a coiled coil.

The protein belongs to the GreA/GreB family.

Functionally, necessary for efficient RNA polymerase transcription elongation past template-encoded arresting sites. The arresting sites in DNA have the property of trapping a certain fraction of elongating RNA polymerases that pass through, resulting in locked ternary complexes. Cleavage of the nascent transcript by cleavage factors such as GreA or GreB allows the resumption of elongation from the new 3'terminus. GreA releases sequences of 2 to 3 nucleotides. The chain is Transcription elongation factor GreA from Helicobacter hepaticus (strain ATCC 51449 / 3B1).